An 830-amino-acid chain; its full sequence is Cadherin-16 (830 aa).

The signal sequence occupies residues 1–21 (MISARPWLLYLSVIQAFTTEA). Residues 22 to 788 (QPAESLHTEV…MKGMPTKLSA (767 aa)) lie on the Extracellular side of the membrane. Cadherin domains follow at residues 27-128 (LHTE…VPQF), 133-237 (YRAQ…SIVE), 244-338 (EPVH…APVC), 343-451 (PTVN…APEF), 457-566 (GPVT…PLKL), and 571-667 (YETS…VPAL). Residues N519, N604, and N724 are each glycosylated (N-linked (GlcNAc...) asparagine). An ectodomain G region spans residues 668–788 (TLSAGPSRHL…MKGMPTKLSA (121 aa)). Residues 789-809 (VGVLLGTLAAIGFILILVFTH) form a helical membrane-spanning segment. Residues 810–830 (LALARKDLDQPADSVPLKAAV) lie on the Cytoplasmic side of the membrane. S823 is subject to Phosphoserine.

Kidney specific.

The protein resides in the cell membrane. Its function is as follows. Cadherins are calcium-dependent cell adhesion proteins. They preferentially interact with themselves in a homophilic manner in connecting cells; cadherins may thus contribute to the sorting of heterogeneous cell types. This chain is Cadherin-16 (Cdh16), found in Mus musculus (Mouse).